The sequence spans 223 residues: Acetate CoA-transferase subunit beta (223 aa).

Glu46 is an active-site residue.

The protein belongs to the 3-oxoacid CoA-transferase subunit B family. As to quaternary structure, heterotetramer composed of two alpha subunits (AtoD) and two beta subunits (AtoA).

It carries out the reaction an acyl-CoA + acetate = a carboxylate + acetyl-CoA. The enzyme catalyses acetoacetate + acetyl-CoA = acetoacetyl-CoA + acetate. It participates in lipid metabolism; short-chain fatty acid metabolism. Its function is as follows. Coenzyme A transferase which is involved in short-chain fatty acid degradation and catalyzes the activation of short-chain fatty acids to their respective CoA thiolesters. The protein is Acetate CoA-transferase subunit beta (atoA) of Haemophilus influenzae (strain ATCC 51907 / DSM 11121 / KW20 / Rd).